We begin with the raw amino-acid sequence, 1162 residues long: Transcription termination factor 2 (1162 aa).

Zn(2+) is bound by residues cysteine 6, histidine 9, cysteine 32, and cysteine 37. The GRF-type zinc-finger motif lies at 6-46 (CPEHGTFCFLKTGVRDGPNKGKSFYVCRADTCSFVRATDIP). 4 disordered regions span residues 97–116 (PDSKEHSVSNKSQHASETFH), 142–358 (IKGE…EEDD), 388–407 (DRSVQRKVSPASGVSKKVEP), and 459–503 (LSPE…TQPV). Residues 105–116 (SNKSQHASETFH) show a composition bias toward polar residues. Positions 142–178 (IKGEGEEKKADKKQREKGDQLFDQKKEQKPEMMEKDL) are enriched in basic and acidic residues. Lysine 143 is covalently cross-linked (Glycyl lysine isopeptide (Lys-Gly) (interchain with G-Cter in SUMO2)). Residues 219–232 (IKSQQCQGNELTRP) are compositionally biased toward polar residues. Positions 233–245 (SASSQEKSSGKSQ) are enriched in low complexity. Positions 246 to 258 (DVQRESEPLREKV) are enriched in basic and acidic residues. Over residues 261 to 274 (LLPQNVHSHNSISK) the composition is skewed to polar residues. The segment covering 323-338 (PAPGGPAAQAAPAAPG) has biased composition (low complexity). Over residues 459-485 (LSPEQGTNEKSNSQVPQQSHFTKTTTG) the composition is skewed to polar residues. Serine 460 carries the phosphoserine modification. A Helicase ATP-binding domain is found at 583 to 786 (WRESQKPQGG…YSLLKFLRCS (204 aa)). 596 to 603 (DDMGLGKT) lines the ATP pocket. The DEAH box signature appears at 737–740 (DEAH). The interval 871–890 (KRHESRGNQSGRSPNNPFSR) is disordered. Residues 877–888 (GNQSGRSPNNPF) are compositionally biased toward polar residues. A phosphoserine mark is found at serine 883 and serine 908. The Helicase C-terminal domain maps to 995-1157 (SLLAELEAIQ…VTKLTLADLR (163 aa)).

This sequence belongs to the SNF2/RAD54 helicase family. In terms of assembly, interacts with CDC5L. Part of the spliceosome.

It localises to the cytoplasm. It is found in the nucleus. In terms of biological role, dsDNA-dependent ATPase which acts as a transcription termination factor by coupling ATP hydrolysis with removal of RNA polymerase II from the DNA template. May contribute to mitotic transcription repression. May also be involved in pre-mRNA splicing. In Homo sapiens (Human), this protein is Transcription termination factor 2 (TTF2).